The primary structure comprises 118 residues: Ferredoxin-thioredoxin reductase, catalytic chain (118 aa).

C56 contributes to the [4Fe-4S] cluster binding site. The active-site Nucleophile is the C58. Residues C58 and C88 are joined by a disulfide bond. Residues C75, C77, and C86 each contribute to the [4Fe-4S] cluster site.

This sequence belongs to the ferredoxin thioredoxin reductase beta subunit family. In terms of assembly, heterodimer of subunit A (variable subunit) and subunit B (catalytic subunit). Heterodimeric FTR forms a complex with ferredoxin and thioredoxin. Requires [4Fe-4S] cluster as cofactor.

It catalyses the reaction [thioredoxin]-disulfide + 2 reduced [2Fe-2S]-[ferredoxin] + 2 H(+) = [thioredoxin]-dithiol + 2 oxidized [2Fe-2S]-[ferredoxin]. Functionally, catalytic subunit of the ferredoxin-thioredoxin reductase (FTR), which catalyzes the two-electron reduction of thioredoxins by the electrons provided by reduced ferredoxin. The polypeptide is Ferredoxin-thioredoxin reductase, catalytic chain (Synechocystis sp. (strain ATCC 27184 / PCC 6803 / Kazusa)).